A 371-amino-acid polypeptide reads, in one-letter code: RNA-binding protein 48 (371 aa).

The region spanning 46–124 is the RRM domain; that stretch reads QYLLIQGVPA…GLLHVCYAPE (79 aa). 2 disordered regions span residues 157–191 and 348–371; these read KPVP…PESP and VPKP…RRRI. The segment covering 158-170 has biased composition (basic and acidic residues); sequence PVPEQKGTKDSRQ.

Belongs to the RBM48 family. In terms of assembly, component of the minor spliceosome. Within this complex, interacts with ARMC7 and PRPF8/PRP8.

As a component of the minor spliceosome, involved in the splicing of U12-type introns in pre-mRNAs. This is RNA-binding protein 48 (Rbm48) from Mus musculus (Mouse).